Here is a 215-residue protein sequence, read N- to C-terminus: Ribosomal RNA small subunit methyltransferase G (215 aa).

S-adenosyl-L-methionine contacts are provided by residues glycine 82, methionine 87, 133–134, and arginine 148; that span reads VE.

The protein belongs to the methyltransferase superfamily. RNA methyltransferase RsmG family.

It localises to the cytoplasm. The catalysed reaction is guanosine(527) in 16S rRNA + S-adenosyl-L-methionine = N(7)-methylguanosine(527) in 16S rRNA + S-adenosyl-L-homocysteine. Specifically methylates the N7 position of guanine in position 527 of 16S rRNA. In Stutzerimonas stutzeri (strain A1501) (Pseudomonas stutzeri), this protein is Ribosomal RNA small subunit methyltransferase G.